We begin with the raw amino-acid sequence, 328 residues long: Nitrilase (328 aa).

Positions Val9 to Val286 constitute a CN hydrolase domain. Catalysis depends on Glu49, which acts as the Proton acceptor. Residue Lys131 is part of the active site. Cys166 acts as the Nucleophile in catalysis.

It belongs to the carbon-nitrogen hydrolase superfamily. Nitrilase family.

The catalysed reaction is a nitrile + 2 H2O = a carboxylate + NH4(+). Functionally, nitrilase that hydrolyzes preferentially 4-cyanopyridine. Is also able to hydrolyze some aliphatic nitriles, such as (R,S)-mandelonitrile. In Penicillium rubens (strain ATCC 28089 / DSM 1075 / NRRL 1951 / Wisconsin 54-1255) (Penicillium chrysogenum), this protein is Nitrilase.